The following is a 416-amino-acid chain: D-amino acid dehydrogenase (416 aa).

Residue 3–17 (VTILGAGVIGVTTAY) participates in FAD binding.

The protein belongs to the DadA oxidoreductase family. Requires FAD as cofactor.

It catalyses the reaction a D-alpha-amino acid + A + H2O = a 2-oxocarboxylate + AH2 + NH4(+). The protein operates within amino-acid degradation; D-alanine degradation; NH(3) and pyruvate from D-alanine: step 1/1. Functionally, oxidative deamination of D-amino acids. The chain is D-amino acid dehydrogenase from Rhizobium rhizogenes (strain K84 / ATCC BAA-868) (Agrobacterium radiobacter).